Here is a 129-residue protein sequence, read N- to C-terminus: CD59B glycoprotein (129 aa).

Positions 1 to 23 (MRAQRGLILLLLLLAVFCSTAVS) are cleaved as a signal peptide. The UPAR/Ly6 domain maps to 24 to 107 (LKCYNCLDPV…GLEEPNNAET (84 aa)). 5 disulfides stabilise this stretch: Cys26–Cys49, Cys29–Cys36, Cys42–Cys62, Cys68–Cys86, and Cys87–Cys92. Residue Asn39 is glycosylated (N-linked (GlcNAc...) asparagine). Asn104 carries GPI-anchor amidated asparagine lipidation. Residues 105–129 (AETSSLRKTALLGTSVLVAILKFCF) constitute a propeptide, removed in mature form.

Interacts with T-cell surface antigen CD2. Post-translationally, N- and O-glycosylated. Widely expressed in the kidneys, brain, lungs, spleen and testis Testis-specific.

The protein resides in the cell membrane. The protein localises to the secreted. In terms of biological role, potent inhibitor of the complement membrane attack complex (MAC) action, which protects self-cells from damage during complement activation. Acts by binding to the beta-haipins of C8 (C8A and C8B) components of the assembling MAC, forming an intermolecular beta-sheet that prevents incorporation of the multiple copies of C9 required for complete formation of the osmolytic pore. This Mus musculus (Mouse) protein is CD59B glycoprotein.